The sequence spans 663 residues: Polyunsaturated fatty acid lipoxygenase ALOX15 (663 aa).

Residues 2-115 form the PLAT domain; the sequence is GLYRVRVSTG…ILSLPEGTAR (114 aa). Positions 116-663 constitute a Lipoxygenase domain; the sequence is TVVDDPQGLF…PSRVENSVAI (548 aa). The Fe cation site is built by His361, His366, His541, His545, and Ile663.

It belongs to the lipoxygenase family. In terms of assembly, interacts with PEBP1; in response to IL13/interleukin-13, prevents the interaction of PEBP1 with RAF1 to activate the ERK signaling cascade. The cofactor is Fe cation.

The protein localises to the cytoplasm. The protein resides in the cytosol. It localises to the cell membrane. Its subcellular location is the lipid droplet. It carries out the reaction (5Z,8Z,11Z,14Z)-eicosatetraenoate + O2 = (12S)-hydroperoxy-(5Z,8Z,10E,14Z)-eicosatetraenoate. It catalyses the reaction (5Z,8Z,11Z,14Z)-eicosatetraenoate + O2 = (15S)-hydroperoxy-(5Z,8Z,11Z,13E)-eicosatetraenoate. The enzyme catalyses (9Z,12Z)-octadecadienoate + O2 = (13S)-hydroperoxy-(9Z,11E)-octadecadienoate. The catalysed reaction is (5Z,8Z,11Z,14Z)-eicosatetraenoate + 2 O2 = (14R,15S)-dihydroperoxy-(5Z,8Z,10E,12E)-eicosatetraenoate. It carries out the reaction (5Z,8Z,11Z,14Z)-eicosatetraenoate + 2 O2 = (8S,15S)-dihydroperoxy-(5Z,9E,11Z,13E)-eicosatetraenoate. It catalyses the reaction (14S,15R)-epoxy-(5Z,8Z,11Z)-eicosatrienoate + O2 = (8S)-hydroperoxy-(14S,15R)-epoxy-(5Z,9E,11Z)-eicosatrienoate. The enzyme catalyses (14S,15R)-epoxy-(5Z,8Z,11Z)-eicosatrienoate + O2 = (12S)-hydroperoxy-(14S,15R)-epoxy-(5Z,8Z,10E)-eicosatrienoate. The catalysed reaction is (14R,15S)-epoxy-(5Z,8Z,11Z)-eicosatrienoate + O2 = (5S)-hydroperoxy-(14R,15S)-epoxy-(6E,8Z,11Z)-eicosatrienoate. It carries out the reaction (14R,15S)-epoxy-(5Z,8Z,11Z)-eicosatrienoate + O2 = (12S)-hydroperoxy-(14R,15S)-epoxy-(5Z,8Z,10E)-eicosatrienoate. It catalyses the reaction (15R)-hydroperoxy-(5Z,8Z,11Z,13E)-eicosatetraenoate = 15-oxo-(5Z,8Z,11Z,13E)-eicosatetraenoate + H2O. The enzyme catalyses (15S)-hydroperoxy-(5Z,8Z,11Z,13E)-eicosatetraenoate = (14S,15S)-epoxy-(5Z,8Z,10E,12E)-eicosatetraenoate + H2O. The catalysed reaction is (12S)-hydroperoxy-(5Z,8Z,10E,14Z)-eicosatetraenoate = (8S)-hydroxy-(11S,12S)-epoxy-(5Z,9E,14Z)-eicosatrienoate. It carries out the reaction (4Z,7Z,10Z,13Z,16Z,19Z)-docosahexaenoate + O2 = 14-hydroperoxy-(4Z,7Z,10Z,12E,16Z,19Z)-docosahexaenoate. It catalyses the reaction (4Z,7Z,10Z,13Z,16Z)-docosapentaenoate + O2 = 14-hydroperoxy-(4Z,7Z,10Z,12E,16Z)-docosapentaenoate. The enzyme catalyses (7Z,10Z,13Z,16Z,19Z)-docosapentaenoate + O2 = 14-hydroperoxy-(7Z,10Z,12E,16Z,19Z)-docosapentaenoate. The catalysed reaction is (4Z,7Z,10Z,13Z,16Z,19Z)-docosahexaenoate + O2 = (14S)-hydroperoxy-(4Z,7Z,10Z,12E,16Z,19Z)-docosahexaenoate. It carries out the reaction (4Z,7Z,10Z,13Z,16Z,19Z)-docosahexaenoate + O2 = (17S)-hydroperoxy-(4Z,7Z,10Z,13Z,15E,19Z)-docosahexaenoate. It catalyses the reaction (7S)-hydroperoxy-(4Z,8E,10Z,13Z,16Z,19Z)-docosahexaenoate + O2 = (7S,14S)-dihydroperoxy-(4Z,8E,10Z,12E,16Z,19Z)-docosahexaenoate. The enzyme catalyses (7S)-hydroperoxy-(4Z,8E,10Z,13Z,16Z,19Z)-docosahexaenoate + O2 = (7S,17S)-dihydroperoxy-(4Z,8E,10Z,13Z,15E,19Z)-docosahexaenoate. The catalysed reaction is (4Z,7Z,10Z,13Z,16Z,19Z)-docosahexaenoate + O2 = (11S)-hydroperoxy-(4Z,7Z,9E,13Z,16Z,19Z)-docosahexaenoate. It carries out the reaction N-(5Z,8Z,11Z,14Z)-eicosatetraenoyl-taurine + O2 = N-(12S)-hydroperoxy-(5Z,8Z,10E,14Z)-eicosatetraenoyl-taurine. It catalyses the reaction N-(5Z,8Z,11Z,14Z)-eicosatetraenoyl-gamma-aminobutanoate + O2 = N-(12S)-hydroperoxy-(5Z,8Z,10E,14Z)-eicosatetraenoyl-gamma-aminobutanoate. The enzyme catalyses N-(5Z,8Z,11Z,14Z)-eicosatetraenoyl-glycine + O2 = N-(12S)-hydroperoxy-(5Z,8Z,10E,14Z)-eicosatetraenoyl-glycine. The catalysed reaction is N-(5Z,8Z,11Z,14Z)-eicosatetraenoyl-L-alanine + O2 = N-(12S)-hydroperoxy-(5Z,8Z,10E,14Z)-eicosatetraenoyl-alanine. It carries out the reaction N-(5Z,8Z,11Z,14Z)-eicosatetraenoyl-taurine + O2 = N-(15S)-hydroperoxy-(5Z,8Z,11Z,13E)-eicosatetraenoyl-taurine. It catalyses the reaction N-(5Z,8Z,11Z,14Z)-eicosatetraenoyl-gamma-aminobutanoate + O2 = N-(15S)-hydroperoxy-(5Z,8Z,11Z,13E)-eicosatetraenoyl-gamma-aminobutanoate. The enzyme catalyses N-(5Z,8Z,11Z,14Z)-eicosatetraenoyl-glycine + O2 = N-(15S)-hydroperoxy-(5Z,8Z,11Z,13E)-eicosatetraenoyl-glycine. The catalysed reaction is N-(5Z,8Z,11Z,14Z)-eicosatetraenoyl-L-alanine + O2 = N-(15S)-hydroperoxy-(5Z,8Z,11Z,13E)-eicosatetraenoyl-alanine. Its pathway is lipid metabolism; hydroperoxy eicosatetraenoic acid biosynthesis. Its function is as follows. Non-heme iron-containing dioxygenase that catalyzes the stereo-specific peroxidation of free and esterified polyunsaturated fatty acids generating a spectrum of bioactive lipid mediators. It inserts peroxyl groups at C12 or C15 of arachidonate ((5Z,8Z,11Z,14Z)-eicosatetraenoate) producing both 12-hydroperoxyeicosatetraenoate/12-HPETE and 15-hydroperoxyeicosatetraenoate/15-HPETE. It may then act on 12-HPETE to produce hepoxilins, which may show pro-inflammatory properties. Can also peroxidize linoleate ((9Z,12Z)-octadecadienoate) to 13-hydroperoxyoctadecadienoate. May participate in the sequential oxidations of DHA ((4Z,7Z,10Z,13Z,16Z,19Z)-docosahexaenoate) to generate specialized pro-resolving mediators (SPMs)like resolvin D5 ((7S,17S)-diHPDHA) and (7S,14S)-diHPDHA, that actively down-regulate the immune response and have anti-aggregation properties with platelets. Can convert epoxy fatty acids to hydroperoxy-epoxides derivatives followed by an intramolecular nucleophilic substitution leading to the formation of monocyclic endoperoxides. Plays an important role during the maintenance of self-tolerance by peroxidizing membrane-bound phosphatidylethanolamine which can then signal the sorting process for clearance of apoptotic cells during inflammation and prevent an autoimmune response. In addition to its role in the immune and inflammatory responses, this enzyme may play a role in epithelial wound healing in the cornea through production of lipoxin A4 (LXA(4)) and docosahexaenoic acid-derived neuroprotectin D1 (NPD1; 10R,17S-HDHA), both lipid autacoids exhibit anti-inflammatory and neuroprotective properties. Furthermore, it may regulate actin polymerization which is crucial for several biological processes such as the phagocytosis of apoptotic cells. It is also implicated in the generation of endogenous ligands for peroxisome proliferator activated receptor (PPAR-gamma), hence modulating macrophage development and function. It may also exert a negative effect on skeletal development by regulating bone mass through this pathway. As well as participates in ER stress and downstream inflammation in adipocytes, pancreatic islets, and liver. Finally, it is also involved in the cellular response to IL13/interleukin-13. The protein is Polyunsaturated fatty acid lipoxygenase ALOX15 of Sus scrofa (Pig).